Here is a 215-residue protein sequence, read N- to C-terminus: Penicillin-binding protein activator LpoB (215 aa).

The signal sequence occupies residues Met-1–Gly-19. Residue Cys-20 is the site of N-palmitoyl cysteine attachment. A lipid anchor (S-diacylglycerol cysteine) is attached at Cys-20. Residues Ala-28–Arg-78 form a disordered region. The segment covering Pro-37–Pro-48 has biased composition (pro residues). The span at Thr-49–Ala-58 shows a compositional bias: low complexity.

It belongs to the LpoB family. Interacts with PBP1b.

It is found in the cell outer membrane. Its function is as follows. Regulator of peptidoglycan synthesis that is essential for the function of penicillin-binding protein 1B (PBP1b). This chain is Penicillin-binding protein activator LpoB, found in Klebsiella pneumoniae subsp. pneumoniae (strain ATCC 700721 / MGH 78578).